Here is a 431-residue protein sequence, read N- to C-terminus: MAIKAIHARQIFDSRGNPTVEVDVTTAKGLFRAAVPSGASTGVHEALELRDGPPGYMGKGVLKAVANVNSQIAPNLIKSGINVTDQAAVDKFMLDLDGTPNKEKLGANAILGVSLAXCKAGAAEKGLPLYKYIATLAGNKEVIMPVPSFNVINGGSHAGNKLAMQEFMIMPTGASSFTEAMKIGSEVYHNLRAVIKSKYGLDACNVGDEGGFAPSIQDNLEGLELLRTAIDKAGYTGKVXIAMDCAASEFYKEGKYDLDFKNPKSQASSWITSDAMADVYKKMMSTYPIVSIEDPFDQDDWPAWTKLTGECKIQIVGDDLTVTNPLRVQKAIDQKACNCLLLKVNQIGSVSESIKACKMAQEAGWGVMVSHRSGETEDNFIADLVVGLRTGQIKTGAPCRSERLAKYNQLLRIEEDLGGAAKYAGENFRRP.

Substrate is bound by residues His157 and Glu166. Glu209 (proton donor) is an active-site residue. Asp244, Glu293, and Asp318 together coordinate Mg(2+). Substrate-binding residues include Glu293 and Asp318. The active-site Proton acceptor is Lys343. Substrate contacts are provided by residues 370-373 (SHRS) and Lys394.

Belongs to the enolase family. Homodimer. Mg(2+) serves as cofactor.

The protein resides in the cytoplasm. The enzyme catalyses (2R)-2-phosphoglycerate = phosphoenolpyruvate + H2O. It participates in carbohydrate degradation; glycolysis; pyruvate from D-glyceraldehyde 3-phosphate: step 4/5. The chain is Enolase (ENO) from Fasciola hepatica (Liver fluke).